The sequence spans 533 residues: (E)-beta-farnesene synthase (533 aa).

The Mg(2+) site is built by Asp-286, Asp-290, Asn-430, Ser-434, and Glu-438. The DDXXD motif signature appears at 286–290 (DDMMD).

This sequence belongs to the terpene synthase family. The cofactor is Mg(2+). Co(2+) serves as cofactor. Requires Mn(2+) as cofactor.

Its subcellular location is the cytoplasm. The catalysed reaction is (2E,6E)-farnesyl diphosphate = (E)-beta-farnesene + diphosphate. The protein operates within secondary metabolite biosynthesis; terpenoid biosynthesis. Its function is as follows. Sesquiterpene cyclase catalyzing the production of sixfold more beta-farnesene than alpha-bergamotene from farnesyl diphosphate. Involved in indirect defense by producing volatile signals attracting natural enemies of herbivores. This is (E)-beta-farnesene synthase from Zea perennis (Perennial teosinte).